Reading from the N-terminus, the 319-residue chain is HTH-type transcriptional regulator YidZ (319 aa).

One can recognise an HTH lysR-type domain in the interval 8-65 (LDLNLLLCLQLLMQERSVTKAAKRMNVTPSAVSKSLAKLRAWFDDPLFVNSPLGLSPT). The H-T-H motif DNA-binding region spans 25–44 (VTKAAKRMNVTPSAVSKSLA).

It belongs to the LysR transcriptional regulatory family.

Its function is as follows. Involved in anaerobic NO protection. This is HTH-type transcriptional regulator YidZ from Escherichia coli O17:K52:H18 (strain UMN026 / ExPEC).